A 546-amino-acid chain; its full sequence is Chaperonin GroEL (546 aa).

ATP is bound by residues 30–33 (TLGP), Lys51, 87–91 (DGTTT), Gly415, 479–481 (NAA), and Asp495. The tract at residues 525 to 546 (PEPKKDMPPMPGGGMGGMGGMY) is disordered. Over residues 536–546 (GGGMGGMGGMY) the composition is skewed to gly residues.

It belongs to the chaperonin (HSP60) family. Forms a cylinder of 14 subunits composed of two heptameric rings stacked back-to-back. Interacts with the co-chaperonin GroES.

The protein localises to the cytoplasm. The enzyme catalyses ATP + H2O + a folded polypeptide = ADP + phosphate + an unfolded polypeptide.. Together with its co-chaperonin GroES, plays an essential role in assisting protein folding. The GroEL-GroES system forms a nano-cage that allows encapsulation of the non-native substrate proteins and provides a physical environment optimized to promote and accelerate protein folding. The chain is Chaperonin GroEL from Solidesulfovibrio magneticus (strain ATCC 700980 / DSM 13731 / RS-1) (Desulfovibrio magneticus).